Consider the following 542-residue polypeptide: Beta-fructofuranosidase, insoluble isoenzyme 5 (542 aa).

Substrate-binding positions include 50–53, Q69, W77, and 114–115; these read WQND and WS. D53 is a catalytic residue. The N-linked (GlcNAc...) asparagine glycan is linked to N142. Substrate is bound by residues 178–179 and E233; that span reads RD. A disulfide bond links C389 and C436. 2 N-linked (GlcNAc...) asparagine glycosylation sites follow: N510 and N516.

Belongs to the glycosyl hydrolase 32 family. Expressed in roots and leaves.

It localises to the secreted. It is found in the extracellular space. The protein resides in the apoplast. Its subcellular location is the cell wall. It catalyses the reaction Hydrolysis of terminal non-reducing beta-D-fructofuranoside residues in beta-D-fructofuranosides.. May play a role in stress response. This chain is Beta-fructofuranosidase, insoluble isoenzyme 5 (CIN5), found in Oryza sativa subsp. japonica (Rice).